Here is a 207-residue protein sequence, read N- to C-terminus: Octanoyltransferase (207 aa).

The BPL/LPL catalytic domain occupies 27–203 (ASTEDELWVV…HLETQFTPKA (177 aa)). Substrate is bound by residues 66-73 (RGGQITYH), 133-135 (SLG), and 146-148 (GLA). C164 functions as the Acyl-thioester intermediate in the catalytic mechanism.

Belongs to the LipB family.

The protein localises to the cytoplasm. It catalyses the reaction octanoyl-[ACP] + L-lysyl-[protein] = N(6)-octanoyl-L-lysyl-[protein] + holo-[ACP] + H(+). Its pathway is protein modification; protein lipoylation via endogenous pathway; protein N(6)-(lipoyl)lysine from octanoyl-[acyl-carrier-protein]: step 1/2. Its function is as follows. Catalyzes the transfer of endogenously produced octanoic acid from octanoyl-acyl-carrier-protein onto the lipoyl domains of lipoate-dependent enzymes. Lipoyl-ACP can also act as a substrate although octanoyl-ACP is likely to be the physiological substrate. The polypeptide is Octanoyltransferase (Neisseria meningitidis serogroup C / serotype 2a (strain ATCC 700532 / DSM 15464 / FAM18)).